Here is a 201-residue protein sequence, read N- to C-terminus: Ras-related protein Rab-1B (201 aa).

Met-1 is subject to N-acetylmethionine. GTP contacts are provided by Ser-17, Gly-18, Val-19, Gly-20, Lys-21, Ser-22, Cys-23, Tyr-33, Thr-34, Glu-35, Ser-36, Ser-39, and Thr-40. A Mg(2+)-binding site is contributed by Ser-22. The Switch 1 signature appears at Asp-30–Phe-45. Residues Thr-40 and Asp-63 each contribute to the Mg(2+) site. The interval Thr-64–Gly-83 is switch 2 region; required for interaction with REP1/CHM. Positions Ala-65 to Gly-80 match the Switch 2 motif. GTP contacts are provided by Gly-66, Asn-121, Lys-122, Asp-124, Ser-151, Ala-152, and Lys-153. The tract at residues Met-173–Cys-201 is disordered. Residues Cys-200 and Cys-201 are each lipidated (S-geranylgeranyl cysteine). Cys-201 is subject to Cysteine methyl ester.

It belongs to the small GTPase superfamily. Rab family. Interacts with MICAL1 and MICAL2. Interacts (in GTP-bound form) with MICALCL, MICAL1 and MILCAL3. Interacts with GDI1; the interaction requires the GDP-bound state. Interacts with CHM/REP1; the interaction requires the GDP-bound form and is necessary for prenylation by GGTase II. Interacts with RabGAP TBC1D20. Interacts (in GDP-bound form) with lipid phosphatase MTMR6 (via GRAM domain); the interaction regulates MTMR6 recruitment to the endoplasmic reticulum-Golgi intermediate compartment. Interacts (in GDP-bound form) with lipid phosphatase MTMR7. Mg(2+) serves as cofactor. In terms of processing, prenylated; by GGTase II, only after interaction of the substrate with Rab escort protein 1 (REP1).

It is found in the cytoplasm. The protein resides in the membrane. The protein localises to the preautophagosomal structure membrane. Its subcellular location is the perinuclear region. It catalyses the reaction GTP + H2O = GDP + phosphate + H(+). With respect to regulation, regulated by guanine nucleotide exchange factors (GEFs) which promote the exchange of bound GDP for free GTP. Regulated by GTPase activating proteins (GAPs) including TBC1D20 which increases the GTP hydrolysis activity. Inhibited by GDP dissociation inhibitors (GDIs). In terms of biological role, the small GTPases Rab are key regulators of intracellular membrane trafficking, from the formation of transport vesicles to their fusion with membranes. Rabs cycle between an inactive GDP-bound form and an active GTP-bound form that is able to recruit to membranes different set of downstream effectors directly responsible for vesicle formation, movement, tethering and fusion. Plays a role in the initial events of the autophagic vacuole development which take place at specialized regions of the endoplasmic reticulum. Regulates vesicular transport between the endoplasmic reticulum and successive Golgi compartments. Required to modulate the compacted morphology of the Golgi. Promotes the recruitment of lipid phosphatase MTMR6 to the endoplasmic reticulum-Golgi intermediate compartment. The chain is Ras-related protein Rab-1B (RAB1B) from Sus scrofa (Pig).